Consider the following 550-residue polypeptide: Neuronal acetylcholine receptor subunit alpha-9-II (550 aa).

An N-terminal signal peptide occupies residues 1–20 (MRKMVPVVCFATMLLQVAHS). The Extracellular segment spans residues 21 to 233 (AQGRYAQQLL…YTVLLQRRSS (213 aa)). An N-linked (GlcNAc...) asparagine glycan is attached at N52. A disulfide bridge links C150 with C164. An N-linked (GlcNAc...) asparagine glycan is attached at N165. The cysteines at positions 214 and 215 are disulfide-linked. 3 consecutive transmembrane segments (helical) span residues 234-254 (FYIF…PLGF), 264-284 (VSLG…VAES), and 298-318 (YIAT…IMNI). Topologically, residues 319 to 528 (HFCGAEAKPV…WKRVAKVMDR (210 aa)) are cytoplasmic. The interval 357 to 439 (TSSSSSSSSS…HLSSSKYEGF (83 aa)) is disordered. Low complexity predominate over residues 358–367 (SSSSSSSSSS). A compositionally biased stretch (basic residues) spans 413–422 (RHPKPRHQHH). A helical membrane pass occupies residues 529 to 549 (FFMWIFFIMVFLMSILIIGKA).

The protein belongs to the ligand-gated ion channel (TC 1.A.9) family. Acetylcholine receptor (TC 1.A.9.1) subfamily. As to expression, expressed in the brain, liver, olfactory mucosa, pituitary gland and hair cells of the saccule.

It localises to the postsynaptic cell membrane. The protein localises to the cell membrane. This Oncorhynchus mykiss (Rainbow trout) protein is Neuronal acetylcholine receptor subunit alpha-9-II.